A 347-amino-acid chain; its full sequence is Protein PET130 (347 aa).

The protein localises to the mitochondrion matrix. This chain is Protein PET130 (PET130), found in Saccharomyces cerevisiae (strain ATCC 204508 / S288c) (Baker's yeast).